The sequence spans 2150 residues: A disintegrin and metalloproteinase with thrombospondin motifs gon-1 (2150 aa).

Positions 1 to 28 (MRSIGGSFHLLQPVVAALILLVVCLVYA) are cleaved as a signal peptide. A propeptide spanning residues 29-273 (LQSGSGTISE…VIERKARSRR (245 aa)) is cleaved from the precursor. 4 N-linked (GlcNAc...) asparagine glycosylation sites follow: Asn134, Asn213, Asn243, and Asn248. Positions 280-493 (HYVEVLVVAD…GQTQCLFDQP (214 aa)) constitute a Peptidase M12B domain. 2 cysteine pairs are disulfide-bonded: Cys402–Cys488 and Cys440–Cys470. His424 contacts Zn(2+). Glu425 is a catalytic residue. Residues His428 and His434 each contribute to the Zn(2+) site. A Disintegrin domain is found at 503–587 (FVRDEPGKKY…RLAPESLTKI (85 aa)). The TSP type-1 1 domain occupies 588–643 (DGQWGDWRSWGECSRTCGGGVQKGLRDCDSPKPRNGGKYCVGQRERYRSCNTQECP). Intrachain disulfides connect Cys600–Cys637, Cys604–Cys642, and Cys615–Cys627. Asn842 carries an N-linked (GlcNAc...) asparagine glycan. TSP type-1 domains follow at residues 943 to 1003 (CSTR…IDCS), 1004 to 1057 (GRKW…RECN), 1060 to 1115 (PCPR…HACT), 1116 to 1165 (WWQF…KPCH), 1168 to 1227 (SCPK…GTCP), 1228 to 1277 (FWRN…QTCH), 1280 to 1339 (PCTS…DTCD), 1352 to 1409 (PPIR…RDCS), 1410 to 1469 (YWKM…EPCP), 1474 to 1524 (HIGS…ELCP), and 1527 to 1585 (TNNS…PPCR). N-linked (GlcNAc...) asparagine glycans are attached at residues Asn1139 and Asn1199. N-linked (GlcNAc...) asparagine glycans are attached at residues Asn1370 and Asn1432. Residues Asn1528, Asn1590, Asn1606, and Asn1654 are each glycosylated (N-linked (GlcNAc...) asparagine). The tract at residues 1590-1614 (NKTSSASMTSLSSSNSNTTSSASAS) is disordered. A compositionally biased stretch (low complexity) spans 1592-1614 (TSSASMTSLSSSNSNTTSSASAS). 5 TSP type-1 domains span residues 1621–1675 (PVVS…VRCR), 1678–1736 (HCPR…VACP), 1737–1793 (AYRW…DTSN), 1794–1866 (CPYE…NPCD), and 1867–1924 (SEFK…RNCL). 6 disulfide bridges follow: Cys1679–Cys1718, Cys1690–Cys1694, Cys1690–Cys1730, Cys1694–Cys1735, Cys1705–Cys1718, and Cys1730–Cys1735. Asn1828 and Asn1855 each carry an N-linked (GlcNAc...) asparagine glycan. The region spanning 1924 to 2123 (LPSTCQELKS…RYKGLIFEVN (200 aa)) is the GON domain. N-linked (GlcNAc...) asparagine glycans are attached at residues Asn1942, Asn1960, and Asn1997.

The cofactor is Zn(2+). In terms of tissue distribution, expressed by the gonadal distal tip cells (DTCs). Expressed in muscles, including body wall, vulval and anal depressor muscles. Expressed in motor neurons and in ASI and ASJ neurons.

Its subcellular location is the secreted. It localises to the extracellular space. It is found in the extracellular matrix. The protein localises to the basement membrane. The protein resides in the endoplasmic reticulum. Its subcellular location is the golgi apparatus. Its function is as follows. Secreted metalloprotease required for distal tip cell (DTC) migration along the body wall basement membranes, a key step that promotes gonad morphogenesis. Probably acts by remodeling the basement membrane during cell migration. Required to restrict presynaptic growth at the neuromuscular junctions (NMJ) in late larval stage and in adult motor neurons, probably by controlling collagen IV emb-9 degradation, a component of the synapse basement membrane. Also involved in the organization of adult muscle morphology. Has a protease-independent function in promoting the transport from the endoplasmic reticulum to the Golgi apparatus of a variety of secretory cargos. Required for the secretion of insulin-like peptide ins-7, daf-28 and ins-18 and TGF beta-like protein daf-7. In peripheral tissues, negatively regulates insulin-mediated daf-16 translocation and thereby negatively regulates lifespan and dauer formation. The sequence is that of A disintegrin and metalloproteinase with thrombospondin motifs gon-1 from Caenorhabditis elegans.